We begin with the raw amino-acid sequence, 67 residues long: uncharacterized protein (67 aa).

This is an uncharacterized protein from Saccharomyces cerevisiae (strain ATCC 204508 / S288c) (Baker's yeast).